Reading from the N-terminus, the 158-residue chain is Transcription elongation factor GreA (158 aa).

The protein belongs to the GreA/GreB family.

In terms of biological role, necessary for efficient RNA polymerase transcription elongation past template-encoded arresting sites. The arresting sites in DNA have the property of trapping a certain fraction of elongating RNA polymerases that pass through, resulting in locked ternary complexes. Cleavage of the nascent transcript by cleavage factors such as GreA or GreB allows the resumption of elongation from the new 3'terminus. GreA releases sequences of 2 to 3 nucleotides. The chain is Transcription elongation factor GreA from Ruthia magnifica subsp. Calyptogena magnifica.